The following is a 260-amino-acid chain: Ribonuclease HII (260 aa).

The RNase H type-2 domain maps to Leu73 to Val260. Residues Asp79, Glu80, and Asp171 each coordinate a divalent metal cation.

This sequence belongs to the RNase HII family. It depends on Mn(2+) as a cofactor. Mg(2+) is required as a cofactor.

Its subcellular location is the cytoplasm. It catalyses the reaction Endonucleolytic cleavage to 5'-phosphomonoester.. Functionally, endonuclease that specifically degrades the RNA of RNA-DNA hybrids. The chain is Ribonuclease HII from Desulfitobacterium hafniense (strain DSM 10664 / DCB-2).